The chain runs to 364 residues: Mitoferrin-2 (364 aa).

A compositionally biased stretch (gly residues) spans 1–17 (MELEGRGAGGVAGGPAA). Disordered regions lie at residues 1–28 (MELE…ESAL) and 40–60 (GAGG…PDSG). Residues 18 to 27 (GPGRSPGESA) show a composition bias toward low complexity. 3 Solcar repeats span residues 70 to 158 (ATVT…LKKT), 168 to 252 (NSHI…LQEH), and 259 to 352 (YNPS…FKYL). Helical transmembrane passes span 72 to 91 (VTTH…CVMY), 133 to 152 (GLNV…FACY), 170 to 189 (HIAN…AAMN), 227 to 246 (SYTT…FMTY), 261 to 280 (PSSH…AATT), and 327 to 346 (GVQA…WSVY).

The protein belongs to the mitochondrial carrier (TC 2.A.29) family. Ubiquitous. Expressed in placenta, lung, kidney, pancreas, liver, brain, skeletal muscle and heart.

It is found in the mitochondrion inner membrane. It catalyses the reaction Fe(2+)(in) = Fe(2+)(out). Functionally, mitochondrial iron transporter that mediates iron uptake. Probably required for heme synthesis of hemoproteins and Fe-S cluster assembly in non-erythroid cells. The polypeptide is Mitoferrin-2 (SLC25A28) (Homo sapiens (Human)).